The sequence spans 338 residues: Limbic system-associated membrane protein (338 aa).

Positions 1–28 (MVARAQPDRKQLPLVLLRLLCLLPTGLP) are cleaved as a signal peptide. Ig-like C2-type domains are found at residues 29-122 (VRSV…PKTS), 132-214 (PKIS…VRVT), and 219-306 (PTIT…LYLY). N-linked (GlcNAc...) asparagine glycosylation is found at Asn40, Asn66, Asn136, and Asn148. Cys53 and Cys111 are joined by a disulfide. 2 disulfides stabilise this stretch: Cys153-Cys197 and Cys239-Cys290. N-linked (GlcNAc...) asparagine glycans are attached at residues Asn279, Asn287, Asn300, and Asn315. The GPI-anchor amidated asparagine moiety is linked to residue Asn315. A propeptide spans 316-338 (GSVSLAVPLWLLAASLLCLLSKC) (removed in mature form).

Belongs to the immunoglobulin superfamily. IgLON family.

Its subcellular location is the cell membrane. Functionally, mediates selective neuronal growth and axon targeting. Probably serves as a recognition molecule for the formation of limbic connections. The sequence is that of Limbic system-associated membrane protein from Gallus gallus (Chicken).